The primary structure comprises 570 residues: Sulfite reductase [NADPH] hemoprotein beta-component (570 aa).

[4Fe-4S] cluster contacts are provided by Cys434, Cys440, Cys479, and Cys483. Cys483 serves as a coordination point for siroheme.

Belongs to the nitrite and sulfite reductase 4Fe-4S domain family. As to quaternary structure, alpha(8)-beta(8). The alpha component is a flavoprotein, the beta component is a hemoprotein. Requires siroheme as cofactor. [4Fe-4S] cluster is required as a cofactor.

It carries out the reaction hydrogen sulfide + 3 NADP(+) + 3 H2O = sulfite + 3 NADPH + 4 H(+). It functions in the pathway sulfur metabolism; hydrogen sulfide biosynthesis; hydrogen sulfide from sulfite (NADPH route): step 1/1. In terms of biological role, component of the sulfite reductase complex that catalyzes the 6-electron reduction of sulfite to sulfide. This is one of several activities required for the biosynthesis of L-cysteine from sulfate. This Salmonella paratyphi A (strain ATCC 9150 / SARB42) protein is Sulfite reductase [NADPH] hemoprotein beta-component.